The sequence spans 57 residues: High-potential iron-sulfur protein (57 aa).

[4Fe-4S] cluster-binding residues include Cys-21, Cys-24, Cys-33, and Cys-46.

It belongs to the high-potential iron-sulfur protein (HiPIP) family. Homodimer.

Specific class of high-redox-potential 4Fe-4S ferredoxins. Functions in anaerobic electron transport in most purple and in some other photosynthetic bacteria and in at least one genus (Paracoccus) of halophilic, denitrifying bacteria. The protein is High-potential iron-sulfur protein (hip) of Rhodopila globiformis (Rhodopseudomonas globiformis).